The primary structure comprises 480 residues: Chromosomal replication initiator protein DnaA (480 aa).

Residues 1-71 (MKEFWQTCVS…EALAAEWYQR (71 aa)) form a domain I, interacts with DnaA modulators region. Positions 71–142 (RPVQVTFELP…DAANIVYERS (72 aa)) are domain II. Positions 143–359 (RLNTDLTFEN…GALRKVLAYA (217 aa)) are domain III, AAA+ region. The ATP site is built by G187, G189, K190, and T191. The domain IV, binds dsDNA stretch occupies residues 360 to 480 (RFHGRDVLTV…LHVLEQTLKG (121 aa)).

The protein belongs to the DnaA family. As to quaternary structure, oligomerizes as a right-handed, spiral filament on DNA at oriC.

The protein localises to the cytoplasm. Plays an essential role in the initiation and regulation of chromosomal replication. ATP-DnaA binds to the origin of replication (oriC) to initiate formation of the DNA replication initiation complex once per cell cycle. Binds the DnaA box (a 9 base pair repeat at the origin) and separates the double-stranded (ds)DNA. Forms a right-handed helical filament on oriC DNA; dsDNA binds to the exterior of the filament while single-stranded (ss)DNA is stabiized in the filament's interior. The ATP-DnaA-oriC complex binds and stabilizes one strand of the AT-rich DNA unwinding element (DUE), permitting loading of DNA polymerase. After initiation quickly degrades to an ADP-DnaA complex that is not apt for DNA replication. Binds acidic phospholipids. This Bordetella bronchiseptica (strain ATCC BAA-588 / NCTC 13252 / RB50) (Alcaligenes bronchisepticus) protein is Chromosomal replication initiator protein DnaA.